The sequence spans 321 residues: Protoheme IX farnesyltransferase (321 aa).

The next 10 membrane-spanning stretches (helical) occupy residues 28–48 (VMSLVIFTALAGMLIAPDPVH), 49–69 (PIVGFASLLAIAVGAGASGAL), 94–114 (VMPNEALAFGLTLSFLSVFTL), 116–136 (IVANWLAAGFLAFTIFFYVVI), 149–169 (IVIGGAAGAFPPMVGYAAATG), 176–196 (FILFAIIFIWTPPHFWALALG), 222–242 (ILLYTLLLAPLGVAPWLLGFA), 247–267 (GMLSIALGAAMLFFAARVYIV), 277–297 (AKALFGFSILYLFLLFAEIVV), and 300–320 (LVPIVVAMGAWLTSGMFPGFF).

Belongs to the UbiA prenyltransferase family. Protoheme IX farnesyltransferase subfamily.

It localises to the cell inner membrane. The enzyme catalyses heme b + (2E,6E)-farnesyl diphosphate + H2O = Fe(II)-heme o + diphosphate. It functions in the pathway porphyrin-containing compound metabolism; heme O biosynthesis; heme O from protoheme: step 1/1. Converts heme B (protoheme IX) to heme O by substitution of the vinyl group on carbon 2 of heme B porphyrin ring with a hydroxyethyl farnesyl side group. The chain is Protoheme IX farnesyltransferase from Beijerinckia indica subsp. indica (strain ATCC 9039 / DSM 1715 / NCIMB 8712).